Here is a 145-residue protein sequence, read N- to C-terminus: Deoxyuridine 5'-triphosphate nucleotidohydrolase (145 aa).

Belongs to the dUTPase family. Mg(2+) serves as cofactor.

It catalyses the reaction dUTP + H2O = dUMP + diphosphate + H(+). Its function is as follows. This enzyme is involved in nucleotide metabolism: it produces dUMP, the immediate precursor of thymidine nucleotides and it decreases the intracellular concentration of dUTP so that uracil cannot be incorporated into DNA. The sequence is that of Deoxyuridine 5'-triphosphate nucleotidohydrolase (DUT) from Fowlpox virus (strain NVSL) (FPV).